Consider the following 223-residue polypeptide: Shematrin-like protein 2 (223 aa).

Positions 1–19 are cleaved as a signal peptide; it reads MRILANLILLGVLFGVCLC.

In terms of tissue distribution, prismatic layer of shell (at protein level).

It is found in the secreted. The protein is Shematrin-like protein 2 of Margaritifera margaritifera (Freshwater pearl mussel).